The sequence spans 223 residues: Kinetochore protein Spc25 (223 aa).

The stretch at Leu65–Ser115 forms a coiled coil.

It belongs to the SPC25 family. In terms of assembly, component of the Ndc80 complex, which is composed of Ndc80, Nuf2 and Spc25.

The protein resides in the nucleus. It localises to the chromosome. The protein localises to the centromere. It is found in the kinetochore. Functionally, acts as a component of the essential kinetochore-associated Ndc80 complex, which is required for chromosome segregation and spindle checkpoint activity during meiosis and mitosis. Required for kinetochore integrity and the organization of stable microtubule binding sites in the outer plate of the kinetochore. Participates in SAC signaling that responds specifically to disruptions in spindle microtubule dynamics. The NDC80 complex synergistically enhances the affinity of the SKA1 complex for microtubules and may allow the NDC80 complex to track depolymerizing microtubules. This chain is Kinetochore protein Spc25, found in Drosophila lutescens (Fruit fly).